The following is a 348-amino-acid chain: Methylthioribose-1-phosphate isomerase (348 aa).

Substrate is bound by residues 51-53 (RGA), R94, and Q199. D240 serves as the catalytic Proton donor. Residue 250–251 (NK) participates in substrate binding.

The protein belongs to the eIF-2B alpha/beta/delta subunits family. MtnA subfamily.

The enzyme catalyses 5-(methylsulfanyl)-alpha-D-ribose 1-phosphate = 5-(methylsulfanyl)-D-ribulose 1-phosphate. The protein operates within amino-acid biosynthesis; L-methionine biosynthesis via salvage pathway; L-methionine from S-methyl-5-thio-alpha-D-ribose 1-phosphate: step 1/6. In terms of biological role, catalyzes the interconversion of methylthioribose-1-phosphate (MTR-1-P) into methylthioribulose-1-phosphate (MTRu-1-P). This is Methylthioribose-1-phosphate isomerase from Nitrosococcus oceani (strain ATCC 19707 / BCRC 17464 / JCM 30415 / NCIMB 11848 / C-107).